The sequence spans 86 residues: Large ribosomal subunit protein uL24 (86 aa).

It belongs to the universal ribosomal protein uL24 family. In terms of assembly, part of the 50S ribosomal subunit.

In terms of biological role, one of two assembly initiator proteins, it binds directly to the 5'-end of the 23S rRNA, where it nucleates assembly of the 50S subunit. One of the proteins that surrounds the polypeptide exit tunnel on the outside of the subunit. The chain is Large ribosomal subunit protein uL24 from Bdellovibrio bacteriovorus (strain ATCC 15356 / DSM 50701 / NCIMB 9529 / HD100).